Consider the following 463-residue polypeptide: NADH dehydrogenase [ubiquinone] iron-sulfur protein 2, mitochondrial (463 aa).

The N-terminal 33 residues, 1 to 33 (MAALRALCRLRGAAAQVLRPGAGVRLPIQPSRG), are a transit peptide targeting the mitochondrion. Lys-62 bears the N6-acetyllysine mark. Arg-118 is modified (symmetric dimethylarginine). Residues Cys-326, Cys-332, and Cys-347 each coordinate [4Fe-4S] cluster.

This sequence belongs to the complex I 49 kDa subunit family. As to quaternary structure, core subunit of respiratory chain NADH dehydrogenase (Complex I) which is composed of 45 different subunits. Component of the iron-sulfur (IP) fragment of the enzyme. Interacts with NDUFAF3. Interacts with NDUFAF7. Interacts with CERS2. The cofactor is [4Fe-4S] cluster. Dimethylation at Arg-118 by NDUFAF7 takes place after NDUFS2 assembles into the complex I, leading to stabilize the early intermediate complex.

The protein localises to the mitochondrion inner membrane. It carries out the reaction a ubiquinone + NADH + 5 H(+)(in) = a ubiquinol + NAD(+) + 4 H(+)(out). Functionally, core subunit of the mitochondrial membrane respiratory chain NADH dehydrogenase (Complex I) which catalyzes electron transfer from NADH through the respiratory chain, using ubiquinone as an electron acceptor. Essential for the catalytic activity and assembly of complex I. Redox-sensitive, critical component of the oxygen-sensing pathway in the pulmonary vasculature which plays a key role in acute pulmonary oxygen-sensing and hypoxic pulmonary vasoconstriction. Plays an important role in carotid body sensing of hypoxia. Essential for glia-like neural stem and progenitor cell proliferation, differentiation and subsequent oligodendrocyte or neuronal maturation. The sequence is that of NADH dehydrogenase [ubiquinone] iron-sulfur protein 2, mitochondrial (NDUFS2) from Bos taurus (Bovine).